The sequence spans 257 residues: Imidazole glycerol phosphate synthase subunit HisF (257 aa).

Catalysis depends on residues Asp12 and Asp131.

Belongs to the HisA/HisF family. As to quaternary structure, heterodimer of HisH and HisF.

The protein localises to the cytoplasm. The catalysed reaction is 5-[(5-phospho-1-deoxy-D-ribulos-1-ylimino)methylamino]-1-(5-phospho-beta-D-ribosyl)imidazole-4-carboxamide + L-glutamine = D-erythro-1-(imidazol-4-yl)glycerol 3-phosphate + 5-amino-1-(5-phospho-beta-D-ribosyl)imidazole-4-carboxamide + L-glutamate + H(+). Its pathway is amino-acid biosynthesis; L-histidine biosynthesis; L-histidine from 5-phospho-alpha-D-ribose 1-diphosphate: step 5/9. IGPS catalyzes the conversion of PRFAR and glutamine to IGP, AICAR and glutamate. The HisF subunit catalyzes the cyclization activity that produces IGP and AICAR from PRFAR using the ammonia provided by the HisH subunit. This is Imidazole glycerol phosphate synthase subunit HisF from Paraburkholderia phymatum (strain DSM 17167 / CIP 108236 / LMG 21445 / STM815) (Burkholderia phymatum).